Here is a 197-residue protein sequence, read N- to C-terminus: dTTP/UTP pyrophosphatase (197 aa).

Asp-70 functions as the Proton acceptor in the catalytic mechanism.

It belongs to the Maf family. YhdE subfamily. It depends on a divalent metal cation as a cofactor.

The protein localises to the cytoplasm. The enzyme catalyses dTTP + H2O = dTMP + diphosphate + H(+). It catalyses the reaction UTP + H2O = UMP + diphosphate + H(+). Its function is as follows. Nucleoside triphosphate pyrophosphatase that hydrolyzes dTTP and UTP. May have a dual role in cell division arrest and in preventing the incorporation of modified nucleotides into cellular nucleic acids. In Shigella boydii serotype 4 (strain Sb227), this protein is dTTP/UTP pyrophosphatase (yceF2).